A 155-amino-acid polypeptide reads, in one-letter code: Small ribosomal subunit protein uS7 (155 aa).

The protein belongs to the universal ribosomal protein uS7 family. Part of the 30S ribosomal subunit. Contacts proteins S9 and S11.

Its function is as follows. One of the primary rRNA binding proteins, it binds directly to 16S rRNA where it nucleates assembly of the head domain of the 30S subunit. Is located at the subunit interface close to the decoding center, probably blocks exit of the E-site tRNA. This chain is Small ribosomal subunit protein uS7, found in Corynebacterium aurimucosum (strain ATCC 700975 / DSM 44827 / CIP 107346 / CN-1) (Corynebacterium nigricans).